A 227-amino-acid polypeptide reads, in one-letter code: Octanoyltransferase (227 aa).

A BPL/LPL catalytic domain is found at 31 to 209 (ANTIDEIWLV…VFLSLLGGTN (179 aa)). Residues 71 to 78 (RGGKITYH), 139 to 141 (SIG), and 152 to 154 (GLA) contribute to the substrate site. The active-site Acyl-thioester intermediate is Cys170.

This sequence belongs to the LipB family.

Its subcellular location is the cytoplasm. It carries out the reaction octanoyl-[ACP] + L-lysyl-[protein] = N(6)-octanoyl-L-lysyl-[protein] + holo-[ACP] + H(+). It functions in the pathway protein modification; protein lipoylation via endogenous pathway; protein N(6)-(lipoyl)lysine from octanoyl-[acyl-carrier-protein]: step 1/2. Its function is as follows. Catalyzes the transfer of endogenously produced octanoic acid from octanoyl-acyl-carrier-protein onto the lipoyl domains of lipoate-dependent enzymes. Lipoyl-ACP can also act as a substrate although octanoyl-ACP is likely to be the physiological substrate. The protein is Octanoyltransferase of Baumannia cicadellinicola subsp. Homalodisca coagulata.